The chain runs to 131 residues: C-type natriuretic peptide (131 aa).

A signal peptide spans 1–20 (MMCKALVFAVLLLAVPLERA). The propeptide occupies 21 to 109 (DSRALRTPVD…KRALPDRAKR (89 aa)). Residues cysteine 115 and cysteine 131 are joined by a disulfide bond.

This sequence belongs to the natriuretic peptide family. As to expression, highly expressed in brain and liver, and moderately in gut, gills and heart. Expressed to a low level in atrium, ventricle and liver of fresh water eels.

The protein resides in the secreted. In terms of biological role, hormone which plays a role in endochondral ossification through regulation of cartilaginous growth plate chondrocytes proliferation and differentiation. May also be vasoactive and natriuretic. May be important for freshwater adaptation. This is C-type natriuretic peptide (cnp) from Anguilla japonica (Japanese eel).